Consider the following 277-residue polypeptide: 4-hydroxy-3-methylbut-2-enyl diphosphate reductase (277 aa).

Position 12 (C12) interacts with [4Fe-4S] cluster. Residues H36 and H70 each contribute to the (2E)-4-hydroxy-3-methylbut-2-enyl diphosphate site. The dimethylallyl diphosphate site is built by H36 and H70. Residues H36 and H70 each coordinate isopentenyl diphosphate. C92 is a binding site for [4Fe-4S] cluster. Position 120 (H120) interacts with (2E)-4-hydroxy-3-methylbut-2-enyl diphosphate. Dimethylallyl diphosphate is bound at residue H120. H120 contributes to the isopentenyl diphosphate binding site. The active-site Proton donor is E122. T158 contributes to the (2E)-4-hydroxy-3-methylbut-2-enyl diphosphate binding site. C186 is a [4Fe-4S] cluster binding site. The (2E)-4-hydroxy-3-methylbut-2-enyl diphosphate site is built by S214, N216, and S258. Dimethylallyl diphosphate contacts are provided by S214, N216, and S258. Positions 214, 216, and 258 each coordinate isopentenyl diphosphate.

The protein belongs to the IspH family. The cofactor is [4Fe-4S] cluster.

It catalyses the reaction isopentenyl diphosphate + 2 oxidized [2Fe-2S]-[ferredoxin] + H2O = (2E)-4-hydroxy-3-methylbut-2-enyl diphosphate + 2 reduced [2Fe-2S]-[ferredoxin] + 2 H(+). It carries out the reaction dimethylallyl diphosphate + 2 oxidized [2Fe-2S]-[ferredoxin] + H2O = (2E)-4-hydroxy-3-methylbut-2-enyl diphosphate + 2 reduced [2Fe-2S]-[ferredoxin] + 2 H(+). Its pathway is isoprenoid biosynthesis; dimethylallyl diphosphate biosynthesis; dimethylallyl diphosphate from (2E)-4-hydroxy-3-methylbutenyl diphosphate: step 1/1. It participates in isoprenoid biosynthesis; isopentenyl diphosphate biosynthesis via DXP pathway; isopentenyl diphosphate from 1-deoxy-D-xylulose 5-phosphate: step 6/6. Functionally, catalyzes the conversion of 1-hydroxy-2-methyl-2-(E)-butenyl 4-diphosphate (HMBPP) into a mixture of isopentenyl diphosphate (IPP) and dimethylallyl diphosphate (DMAPP). Acts in the terminal step of the DOXP/MEP pathway for isoprenoid precursor biosynthesis. This Campylobacter jejuni subsp. jejuni serotype O:2 (strain ATCC 700819 / NCTC 11168) protein is 4-hydroxy-3-methylbut-2-enyl diphosphate reductase.